The primary structure comprises 257 residues: Transcription factor MYB3 (257 aa).

HTH myb-type domains lie at 9–61 and 62–116; these read KAHM…MNYL and RPDL…KRKL. 2 consecutive DNA-binding regions (H-T-H motif) follow at residues 37–61 and 89–112; these read WRSL…MNYL and WSLI…NTHI. A Required for interaction with CPL1 motif is present at residues 189–193; the sequence is LNLEL.

In terms of assembly, interacts with CPL1. Expressed in roots, stems, leaves, flowers and siliques.

It localises to the nucleus. The sequence is that of Transcription factor MYB3 (MYB3) from Arabidopsis thaliana (Mouse-ear cress).